A 521-amino-acid polypeptide reads, in one-letter code: MAKITRALISVSDKTGILDFARELAGYGVEILSTGGTAKLLRDAGLAVKDVSDFTGFPEMLDGRVKTLHPKVHGGLLGMRSNPDHVATMKAHGIEPIDLVVVNLYPFEATVAKPECTLEDAIENIDIGGPTMLRSAAKNNADVTVLVDPADYRPVLDEMKASGGAVSRETNFCLAVKVYQHTAAYDGAISNWLGARTGEGIAAYPDTVTLQFRKAQEMRYGENPHQGAAFYVERQVKEASVATARQLQGKELSYNNIADTDAALECVKQFAEGPACVIVKHANPCGVAVGGTLLEAYDRAYATDPESAFGGIIAFNRELDADTARAICDRQFVEVIIAPAVSPEATEVVAAKKNVRLLECGTWPEKQQPRLDLKRVNGGILVQDTDLDLYAELKVVTKRQPTEQEMKDLLFAWRVAKFVKSNAIVYGKGNMTIGVGAGQMSRVNSARIAAIKAEHAGLEVKGAVMASDAFFPFRDGIDNAAAVGITAVIQPGGSMRDAEVIAAADEHGMAMVFTGMRHFRH.

Residues Met1–Val147 enclose the MGS-like domain.

It belongs to the PurH family.

The catalysed reaction is (6R)-10-formyltetrahydrofolate + 5-amino-1-(5-phospho-beta-D-ribosyl)imidazole-4-carboxamide = 5-formamido-1-(5-phospho-D-ribosyl)imidazole-4-carboxamide + (6S)-5,6,7,8-tetrahydrofolate. It catalyses the reaction IMP + H2O = 5-formamido-1-(5-phospho-D-ribosyl)imidazole-4-carboxamide. It functions in the pathway purine metabolism; IMP biosynthesis via de novo pathway; 5-formamido-1-(5-phospho-D-ribosyl)imidazole-4-carboxamide from 5-amino-1-(5-phospho-D-ribosyl)imidazole-4-carboxamide (10-formyl THF route): step 1/1. The protein operates within purine metabolism; IMP biosynthesis via de novo pathway; IMP from 5-formamido-1-(5-phospho-D-ribosyl)imidazole-4-carboxamide: step 1/1. The chain is Bifunctional purine biosynthesis protein PurH from Geobacter sulfurreducens (strain ATCC 51573 / DSM 12127 / PCA).